A 228-amino-acid polypeptide reads, in one-letter code: Venom allergen 5 (228 aa).

Residues 1–22 (MTKIDLLARVFVIATIIALATA) form the signal peptide. 3 disulfides stabilise this stretch: Cys30–Cys124, Cys51–Cys117, and Cys195–Cys212. One can recognise an SCP domain in the interval 69–214 (KEHNDYGHKV…WNKHFLVCNY (146 aa)).

It belongs to the CRISP family. Venom allergen 5-like subfamily. In terms of tissue distribution, expressed by the venom gland.

It is found in the secreted. In Rhynchium brunneum (Potter wasp), this protein is Venom allergen 5.